The following is a 374-amino-acid chain: uncharacterized protein (374 aa).

The N-terminal stretch at 1–23 (MDSKWFFIVLISFLLVLPSIVTP) is a signal peptide. The segment at 66–374 (SSSSSSSSSS…SSSSSSSGEN (309 aa)) is disordered.

It is found in the secreted. This is an uncharacterized protein from Dictyostelium discoideum (Social amoeba).